Here is a 93-residue protein sequence, read N- to C-terminus: Small ribosomal subunit protein uS19 (93 aa).

It belongs to the universal ribosomal protein uS19 family.

In terms of biological role, protein S19 forms a complex with S13 that binds strongly to the 16S ribosomal RNA. This chain is Small ribosomal subunit protein uS19, found in Ehrlichia ruminantium (strain Welgevonden).